The chain runs to 604 residues: Glutamyl-tRNA(Gln) amidotransferase subunit B, mitochondrial (604 aa).

The N-terminal 48 residues, 1–48, are a transit peptide targeting the mitochondrion; it reads MIRQCLSRRGAYSRYRLAARGVELAEPFHHQSSRPQGRRNWSSSPRCS. Residues 28-57 form a disordered region; the sequence is FHHQSSRPQGRRNWSSSPRCSLDIRTDTPR. Residues 33 to 46 are compositionally biased toward polar residues; it reads SRPQGRRNWSSSPR.

Belongs to the GatB/GatE family. GatB subfamily. As to quaternary structure, subunit of the heterotrimeric GatCAB amidotransferase (AdT) complex, composed of A, B and C subunits.

It is found in the mitochondrion. The catalysed reaction is L-glutamyl-tRNA(Gln) + L-glutamine + ATP + H2O = L-glutaminyl-tRNA(Gln) + L-glutamate + ADP + phosphate + H(+). Functionally, allows the formation of correctly charged Gln-tRNA(Gln) through the transamidation of misacylated Glu-tRNA(Gln) in the mitochondria. The reaction takes place in the presence of glutamine and ATP through an activated gamma-phospho-Glu-tRNA(Gln). This chain is Glutamyl-tRNA(Gln) amidotransferase subunit B, mitochondrial, found in Ajellomyces dermatitidis (strain ER-3 / ATCC MYA-2586) (Blastomyces dermatitidis).